The sequence spans 210 residues: Eukaryotic translation initiation factor 2 subunit gamma (210 aa).

Residues 1-196 (IGHVAHGKST…HLVETITPPR (196 aa)) enclose the tr-type G domain. Positions 2–9 (GHVAHGKS) are G1. 5-10 (AHGKST) is a GTP binding site. The interval 30-34 (NITIK) is G2. Positions 85-88 (DCPG) are G3. GTP is bound by residues 141–144 (NKID) and 174–176 (SAI). Positions 141–144 (NKID) are G4. Residues 174–176 (SAI) form a G5 region.

The protein belongs to the TRAFAC class translation factor GTPase superfamily. Classic translation factor GTPase family. EIF2G subfamily. In terms of assembly, eukaryotic translation initiation factor 2 eIF2 is a heterotrimeric complex composed of an alpha, a beta and a gamma subunit. The factors eIF-1, eIF-2, eIF-3, TIF5/eIF-5 and methionyl-tRNAi form a multifactor complex (MFC) that may bind to the 40S ribosome.

Its subcellular location is the cytoplasm. It is found in the cytosol. It catalyses the reaction GTP + H2O = GDP + phosphate + H(+). In terms of biological role, as a subunit of eukaryotic initiation factor 2 eIF2, involved in the early steps of protein synthesis. In the presence of GTP, eIF-2 forms a ternary complex with initiator tRNA Met-tRNAi and then recruits the 40S ribosomal complex and initiation factors eIF-1, eIF-1A and eIF-3 to form the 43S pre-initiation complex (43S PIC), a step that determines the rate of protein translation. The 43S PIC binds to mRNA and scans downstream to the initiation codon, where it forms a 48S initiation complex by codon-anticodon base pairing. This leads to the displacement of eIF-1 to allow GTPase-activating protein (GAP) eIF-5-mediated hydrolysis of eIF2-bound GTP. Hydrolysis of GTP and release of Pi, which makes GTP hydrolysis irreversible, causes the release of the eIF-2-GDP binary complex from the 40S subunit, an event that is essential for the subsequent joining of the 60S ribosomal subunit to form an elongation-competent 80S ribosome. In order for eIF-2 to recycle and catalyze another round of initiation, the GDP bound to eIF-2 must be exchanged with GTP by way of a reaction catalyzed by GDP-GTP exchange factor (GEF) eIF-2B. In Spironucleus vortens, this protein is Eukaryotic translation initiation factor 2 subunit gamma.